A 209-amino-acid chain; its full sequence is Uracil phosphoribosyltransferase (209 aa).

5-phospho-alpha-D-ribose 1-diphosphate is bound by residues arginine 79, arginine 104, and aspartate 131–serine 139. Uracil is bound by residues isoleucine 194 and glycine 199–alanine 201. Position 200 (aspartate 200) interacts with 5-phospho-alpha-D-ribose 1-diphosphate.

It belongs to the UPRTase family. The cofactor is Mg(2+).

It catalyses the reaction UMP + diphosphate = 5-phospho-alpha-D-ribose 1-diphosphate + uracil. It participates in pyrimidine metabolism; UMP biosynthesis via salvage pathway; UMP from uracil: step 1/1. Its activity is regulated as follows. Allosterically activated by GTP. Functionally, catalyzes the conversion of uracil and 5-phospho-alpha-D-ribose 1-diphosphate (PRPP) to UMP and diphosphate. This is Uracil phosphoribosyltransferase from Rhizobium leguminosarum bv. trifolii (strain WSM2304).